The following is a 488-amino-acid chain: Glutamyl-tRNA(Gln) amidotransferase subunit A (488 aa).

Active-site charge relay system residues include Lys77 and Ser152. Catalysis depends on Ser176, which acts as the Acyl-ester intermediate.

This sequence belongs to the amidase family. GatA subfamily. In terms of assembly, heterotrimer of A, B and C subunits.

The catalysed reaction is L-glutamyl-tRNA(Gln) + L-glutamine + ATP + H2O = L-glutaminyl-tRNA(Gln) + L-glutamate + ADP + phosphate + H(+). Allows the formation of correctly charged Gln-tRNA(Gln) through the transamidation of misacylated Glu-tRNA(Gln) in organisms which lack glutaminyl-tRNA synthetase. The reaction takes place in the presence of glutamine and ATP through an activated gamma-phospho-Glu-tRNA(Gln). This Streptococcus pyogenes serotype M28 (strain MGAS6180) protein is Glutamyl-tRNA(Gln) amidotransferase subunit A.